Here is a 355-residue protein sequence, read N- to C-terminus: Methionine import ATP-binding protein MetN (355 aa).

One can recognise an ABC transporter domain in the interval 8–250 (LKNIDITFTQ…PQEDLTQEFI (243 aa)). ATP is bound at residue 42-49 (GYSGAGKS).

The protein belongs to the ABC transporter superfamily. Methionine importer (TC 3.A.1.24) family. As to quaternary structure, the complex is composed of two ATP-binding proteins (MetN), two transmembrane proteins (MetI) and a solute-binding protein (MetQ).

It localises to the cell membrane. It carries out the reaction L-methionine(out) + ATP + H2O = L-methionine(in) + ADP + phosphate + H(+). The catalysed reaction is D-methionine(out) + ATP + H2O = D-methionine(in) + ADP + phosphate + H(+). In terms of biological role, part of the ABC transporter complex MetNIQ involved in methionine import. Responsible for energy coupling to the transport system. The chain is Methionine import ATP-binding protein MetN from Streptococcus thermophilus (strain CNRZ 1066).